We begin with the raw amino-acid sequence, 256 residues long: Protein RKD4 (256 aa).

Residues 130 to 216 (EKVTVKKKRN…MEEEVKNLEE (87 aa)) enclose the RWP-RK domain. A coiled-coil region spans residues 190-224 (RKLKSLNSLIKNLKNVGMEEEVKNLEEHRFLIEQE).

Its subcellular location is the nucleus. Its function is as follows. Putative transcription factor. The protein is Protein RKD4 (RKD4) of Arabidopsis thaliana (Mouse-ear cress).